Consider the following 34-residue polypeptide: Mu-conotoxin GS (34 aa).

Disulfide bonds link C2–C14, C9–C19, and C13–C27. 4-hydroxyproline is present on residues P10 and P11. 4-carboxyglutamate is present on E32.

As to expression, expressed by the venom duct.

The protein resides in the secreted. In terms of biological role, mu-conotoxins block voltage-gated sodium channels (Nav). No effect was observed upon injections into mice and goldfish (25 ug). In Conus geographus (Geography cone), this protein is Mu-conotoxin GS.